Here is a 502-residue protein sequence, read N- to C-terminus: ATP synthase subunit alpha (502 aa).

Glycine 169 to threonine 176 serves as a coordination point for ATP.

Belongs to the ATPase alpha/beta chains family. F-type ATPases have 2 components, CF(1) - the catalytic core - and CF(0) - the membrane proton channel. CF(1) has five subunits: alpha(3), beta(3), gamma(1), delta(1), epsilon(1). CF(0) has three main subunits: a(1), b(2) and c(9-12). The alpha and beta chains form an alternating ring which encloses part of the gamma chain. CF(1) is attached to CF(0) by a central stalk formed by the gamma and epsilon chains, while a peripheral stalk is formed by the delta and b chains.

It is found in the cell inner membrane. It catalyses the reaction ATP + H2O + 4 H(+)(in) = ADP + phosphate + 5 H(+)(out). Functionally, produces ATP from ADP in the presence of a proton gradient across the membrane. The alpha chain is a regulatory subunit. This is ATP synthase subunit alpha from Desulfovibrio desulfuricans (strain ATCC 27774 / DSM 6949 / MB).